The sequence spans 155 residues: Small ribosomal subunit protein uS7cz/uS7cy (155 aa).

This sequence belongs to the universal ribosomal protein uS7 family. In terms of assembly, part of the 30S ribosomal subunit.

The protein resides in the plastid. It is found in the chloroplast. Its function is as follows. One of the primary rRNA binding proteins, it binds directly to 16S rRNA where it nucleates assembly of the head domain of the 30S subunit. This is Small ribosomal subunit protein uS7cz/uS7cy (rps7-A) from Cucumis sativus (Cucumber).